The chain runs to 484 residues: Glutamate--tRNA ligase (484 aa).

Residues 11 to 21 (PSPTGYLHIGN) carry the 'HIGH' region motif. Residues 252 to 256 (KLSKR) carry the 'KMSKS' region motif. Residue Lys-255 coordinates ATP.

It belongs to the class-I aminoacyl-tRNA synthetase family. Glutamate--tRNA ligase type 1 subfamily. In terms of assembly, monomer.

Its subcellular location is the cytoplasm. It carries out the reaction tRNA(Glu) + L-glutamate + ATP = L-glutamyl-tRNA(Glu) + AMP + diphosphate. Functionally, catalyzes the attachment of glutamate to tRNA(Glu) in a two-step reaction: glutamate is first activated by ATP to form Glu-AMP and then transferred to the acceptor end of tRNA(Glu). The chain is Glutamate--tRNA ligase from Staphylococcus aureus (strain bovine RF122 / ET3-1).